The sequence spans 238 residues: Segregation and condensation protein A (238 aa).

The protein belongs to the ScpA family. Component of a cohesin-like complex composed of ScpA, ScpB and the Smc homodimer, in which ScpA and ScpB bind to the head domain of Smc. The presence of the three proteins is required for the association of the complex with DNA.

Its subcellular location is the cytoplasm. In terms of biological role, participates in chromosomal partition during cell division. May act via the formation of a condensin-like complex containing Smc and ScpB that pull DNA away from mid-cell into both cell halves. The polypeptide is Segregation and condensation protein A (Macrococcus caseolyticus (strain JCSC5402) (Macrococcoides caseolyticum)).